Consider the following 316-residue polypeptide: 4-hydroxy-3-methylbut-2-enyl diphosphate reductase (316 aa).

Cys-17 serves as a coordination point for [4Fe-4S] cluster. 2 residues coordinate (2E)-4-hydroxy-3-methylbut-2-enyl diphosphate: His-46 and His-79. Dimethylallyl diphosphate contacts are provided by His-46 and His-79. Isopentenyl diphosphate-binding residues include His-46 and His-79. Residue Cys-101 coordinates [4Fe-4S] cluster. His-129 contributes to the (2E)-4-hydroxy-3-methylbut-2-enyl diphosphate binding site. A dimethylallyl diphosphate-binding site is contributed by His-129. Position 129 (His-129) interacts with isopentenyl diphosphate. The Proton donor role is filled by Glu-131. Thr-170 is a binding site for (2E)-4-hydroxy-3-methylbut-2-enyl diphosphate. Cys-200 serves as a coordination point for [4Fe-4S] cluster. (2E)-4-hydroxy-3-methylbut-2-enyl diphosphate-binding residues include Ser-228, Ser-229, Asn-230, and Ser-273. Residues Ser-228, Ser-229, Asn-230, and Ser-273 each coordinate dimethylallyl diphosphate. Isopentenyl diphosphate-binding residues include Ser-228, Ser-229, Asn-230, and Ser-273.

The protein belongs to the IspH family. It depends on [4Fe-4S] cluster as a cofactor.

It catalyses the reaction isopentenyl diphosphate + 2 oxidized [2Fe-2S]-[ferredoxin] + H2O = (2E)-4-hydroxy-3-methylbut-2-enyl diphosphate + 2 reduced [2Fe-2S]-[ferredoxin] + 2 H(+). The enzyme catalyses dimethylallyl diphosphate + 2 oxidized [2Fe-2S]-[ferredoxin] + H2O = (2E)-4-hydroxy-3-methylbut-2-enyl diphosphate + 2 reduced [2Fe-2S]-[ferredoxin] + 2 H(+). Its pathway is isoprenoid biosynthesis; dimethylallyl diphosphate biosynthesis; dimethylallyl diphosphate from (2E)-4-hydroxy-3-methylbutenyl diphosphate: step 1/1. The protein operates within isoprenoid biosynthesis; isopentenyl diphosphate biosynthesis via DXP pathway; isopentenyl diphosphate from 1-deoxy-D-xylulose 5-phosphate: step 6/6. In terms of biological role, catalyzes the conversion of 1-hydroxy-2-methyl-2-(E)-butenyl 4-diphosphate (HMBPP) into a mixture of isopentenyl diphosphate (IPP) and dimethylallyl diphosphate (DMAPP). Acts in the terminal step of the DOXP/MEP pathway for isoprenoid precursor biosynthesis. In Roseobacter denitrificans (strain ATCC 33942 / OCh 114) (Erythrobacter sp. (strain OCh 114)), this protein is 4-hydroxy-3-methylbut-2-enyl diphosphate reductase.